Consider the following 506-residue polypeptide: MEEFKRNLELDRSQQHDFIYPLIFQEYIYALAHDRGLNRSIFLENTGYDNKSSLLIVKRLITHLITQMYQQNRFLFSGNDSNQKKFFGDNTNLYSQMIFEGFAVVVEIPFYLRLLSFLEGKERVKSHNLRSIHSIFPFLEDKFSHLVYVLDILISHPIHLEIVVQTLRYWVKDASSLHLLRFFLHEYPIWNSLITPKKSSFSFSIRNQRFFLFLYNFHVCEYESIFVFLRNQSSHLRSISSETFLERISFYRKIELEVFAKDFKAILWVFKEPFLHYVRYRGKAILASKGTSLLMNKWKYYLVNFWQCYFYMWSQPRRIHINQLSNHSLDFLGYLSTVRLKPLMVRSQMIENSFLIENASKKFDTLMPITPMIGSLSKAKFCNVLGHPMSKPVWAALSDSDIIERFGRIYRNLSHYYSGSLKKMSLYRIKYILRLSCARTLARKHKSTVRAFLKRLGVGLLEEFFTEEEQVFYLTFAKASSNSGELYRRRVWYLDIICINDLANYE.

It belongs to the intron maturase 2 family. MatK subfamily.

It is found in the plastid. It localises to the chloroplast. In terms of biological role, usually encoded in the trnK tRNA gene intron. Probably assists in splicing its own and other chloroplast group II introns. The chain is Maturase K from Rhododendron tomentosum (Marsh Labrador tea).